A 394-amino-acid polypeptide reads, in one-letter code: Cell adhesion molecule 3 (394 aa).

A signal peptide spans 1-17 (MHHPVILLLCLSSLAGA). Over 18–326 (ANLPPEDLSQ…PIPSTSSIDH (309 aa)) the chain is Extracellular. Positions 22–120 (PEDLSQPVTA…PVRTAKAVVT (99 aa)) constitute an Ig-like V-type domain. Intrachain disulfides connect Cys45/Cys105 and Cys147/Cys204. Ig-like C2-type domains lie at 128–223 (PQVS…HKIQ) and 228–306 (PTAK…TFIT). The tract at residues 217 to 240 (SSSHKIQVQYKPTAKIESRPSMPR) is disordered. The span at 230-240 (AKIESRPSMPR) shows a compositional bias: basic and acidic residues. The cysteines at positions 249 and 295 are disulfide-linked. A helical membrane pass occupies residues 327 to 347 (AVIGGVVAVIAFLLFCLLIVL). At 348–394 (GRYLIRHKGTYLTHEAKGSDDAPDADTAIINAEGGQGGSDDKKEYFI) the chain is on the cytoplasmic side. A disordered region spans residues 363-394 (AKGSDDAPDADTAIINAEGGQGGSDDKKEYFI).

It belongs to the nectin family.

It is found in the cell membrane. Its subcellular location is the cell junction. Its function is as follows. May be involved in cell-cell adhesion. In Xenopus laevis (African clawed frog), this protein is Cell adhesion molecule 3 (cadm3).